The following is a 300-amino-acid chain: Quinolinate synthase (300 aa).

Residues H23 and S40 each contribute to the iminosuccinate site. [4Fe-4S] cluster is bound at residue C85. Iminosuccinate is bound by residues 111–113 and S128; that span reads YIN. A [4Fe-4S] cluster-binding site is contributed by C171. Iminosuccinate is bound by residues 198-200 and T215; that span reads HPE. C258 provides a ligand contact to [4Fe-4S] cluster.

It belongs to the quinolinate synthase family. Type 2 subfamily. [4Fe-4S] cluster serves as cofactor.

It localises to the cytoplasm. It carries out the reaction iminosuccinate + dihydroxyacetone phosphate = quinolinate + phosphate + 2 H2O + H(+). The protein operates within cofactor biosynthesis; NAD(+) biosynthesis; quinolinate from iminoaspartate: step 1/1. In terms of biological role, catalyzes the condensation of iminoaspartate with dihydroxyacetone phosphate to form quinolinate. This Clostridium novyi (strain NT) protein is Quinolinate synthase.